The chain runs to 577 residues: Torulene dioxygenase (577 aa).

4 residues coordinate Fe(2+): histidine 239, histidine 291, histidine 361, and histidine 570.

The protein belongs to the carotenoid oxygenase family. The cofactor is Fe(2+).

The protein resides in the cytoplasm. It localises to the cytosol. The catalysed reaction is torulene + O2 = 4'-apo-beta-carotenal + 3-methyl-2-butenal. Its pathway is carotenoid biosynthesis. Functionally, torulene dioxygenase; part of the pathway that mediates the biosynthesis of neurosporaxanthin, a carboxylic apocarotenoid acting as an essential protective pigments and leading to orange pigmentation. CarT mediates the cleavage of torulene into beta-apo-4'-carotenal, the aldehyde corresponding to the acidic neurosporaxanthin. Is also active on other monocyclic synthetic substrates such as beta-apo-8'-carotenal and beta-apo-10'-carotenal to produce beta-apo-14'-carotenal and retinal(beta-apo-15'-carotenal), respectively. Neurosporaxanthin is synthesized from geranyl-geranyl pyrophosphate (GGPP) through several enzymatic activities. Phytoene synthase activity performed by the bifunctional enzyme carAR first produces phytoene from geranyl-geranyl pyrophosphate (GGPP). The phytoene dehydrogenase carB then introduces 4 desaturations to lead to lycopene which is substrate of the carotene cyclase activity of carAR that leads to the production of gamma-carotene. CarB then performs a 5th desaturation reaction to yield torulene. Torulene is the substrate of the dioxidase carT that breaks the molecule, removing five carbon atoms to yield beta-apo-4'-carotenal, whereas the aldehyde dehydrogenase carD mediates the last step by converting beta-apo-4'-carotenal into neurosporaxanthin. The polypeptide is Torulene dioxygenase (Fusarium fujikuroi (Bakanae and foot rot disease fungus)).